The sequence spans 292 residues: Acetyl-coenzyme A carboxylase carboxyl transferase subunit beta (292 aa).

One can recognise a CoA carboxyltransferase N-terminal domain in the interval 29 to 292; that stretch reads LWSKCPECGQ…HGCLQGSAAV (264 aa). Residues Cys-33, Cys-36, Cys-52, and Cys-55 each contribute to the Zn(2+) site. Residues 33-55 form a C4-type zinc finger; it reads CPECGQVVYRKDLLANASVCSNC.

Belongs to the AccD/PCCB family. Acetyl-CoA carboxylase is a heterohexamer composed of biotin carboxyl carrier protein (AccB), biotin carboxylase (AccC) and two subunits each of ACCase subunit alpha (AccA) and ACCase subunit beta (AccD). It depends on Zn(2+) as a cofactor.

It is found in the cytoplasm. It carries out the reaction N(6)-carboxybiotinyl-L-lysyl-[protein] + acetyl-CoA = N(6)-biotinyl-L-lysyl-[protein] + malonyl-CoA. Its pathway is lipid metabolism; malonyl-CoA biosynthesis; malonyl-CoA from acetyl-CoA: step 1/1. Its function is as follows. Component of the acetyl coenzyme A carboxylase (ACC) complex. Biotin carboxylase (BC) catalyzes the carboxylation of biotin on its carrier protein (BCCP) and then the CO(2) group is transferred by the transcarboxylase to acetyl-CoA to form malonyl-CoA. This Synechococcus sp. (strain WH7803) protein is Acetyl-coenzyme A carboxylase carboxyl transferase subunit beta.